The chain runs to 360 residues: Peptide chain release factor 1 (360 aa).

Gln235 bears the N5-methylglutamine mark. The disordered stretch occupies residues 284–312; that stretch reads AKRQQAEASTRRNLLGSGDRSDRNRTYNF.

It belongs to the prokaryotic/mitochondrial release factor family. Post-translationally, methylated by PrmC. Methylation increases the termination efficiency of RF1.

It is found in the cytoplasm. Its function is as follows. Peptide chain release factor 1 directs the termination of translation in response to the peptide chain termination codons UAG and UAA. This Escherichia coli O81 (strain ED1a) protein is Peptide chain release factor 1.